We begin with the raw amino-acid sequence, 426 residues long: Pannexin-1 (426 aa).

Over 1-40 (MAIAHLATEYVFSDFLLKEPTEPKFKGLRLELAVDKMVTC) the chain is Cytoplasmic. Position 40 is an S-nitrosocysteine (Cys-40). Residues 41–61 (IAVGLPLLLISLAFAQEISIG) traverse the membrane as a helical segment. At 62-106 (TQISCFSPSSFSWRQAAFVDSYCWAAVQQKNSLQSESGNLPLWLH) the chain is on the extracellular side. 2 disulfide bridges follow: Cys-66–Cys-264 and Cys-84–Cys-245. A helical membrane pass occupies residues 107–127 (KFFPYILLLFAILLYLPALFW). Residues 128–216 (RFAAAPHLCS…HLIMKYISCR (89 aa)) lie on the Cytoplasmic side of the membrane. Position 198 is a phosphotyrosine (Tyr-198). A helical transmembrane segment spans residues 217-237 (LVTFAVVLLACIYLSYYFSLS). The Extracellular segment spans residues 238–277 (SLSDEFLCSIKSGVLRNDSTIPDSFQCKLIAVGIFQLLSL). Asn-254 carries N-linked (GlcNAc...) asparagine glycosylation. The helical transmembrane segment at 278-298 (INLLVYALLVPVVIYTLFVPF) threads the bilayer. The Cytoplasmic portion of the chain corresponds to 299–426 (RQKTDVLKVY…SRQRLLNSSC (128 aa)). Cys-346 carries the S-nitrosocysteine modification. Positions 407 to 426 (ETAANNGEKNSRQRLLNSSC) are disordered.

Belongs to the pannexin family. In terms of assembly, homoheptameric. Post-translationally, S-nitrosylation inhibits channel currents and ATP release. N-glycosylation plays a role in cell surface targeting. Glycosylation at its extracellular surface makes unlikely that two oligomers could dock to form an intercellular channel such as in gap junctions. Exists in three glycosylation states: non-glycosylated (GLY0), high-mannose glycosylated (GLY1), and fully mature glycosylated (GLY2). In terms of processing, cleaved by CASP3 and CASP7 during apoptosis. Cleavage opens the channel for the release of metabolites and induces plasma membrane permeability during apoptosis. Post-translationally, phosphorylated at Tyr-198 by SRC. Phosphorylation activates ATP release. Constitutively phosphorylated in vascular smooth muscle cells. As to expression, expressed in the eye, thyroid, prostate, kidney and liver. Abundantly expressed in the CNS, including hippocampus, olfactory bulb, cortex, cerebellum and white matter.

The protein resides in the cell membrane. Its subcellular location is the endoplasmic reticulum membrane. The catalysed reaction is Ca(2+)(in) = Ca(2+)(out). The enzyme catalyses ATP(in) = ATP(out). It catalyses the reaction K(+)(in) = K(+)(out). It carries out the reaction chloride(in) = chloride(out). The catalysed reaction is iodide(out) = iodide(in). The enzyme catalyses Na(+)(in) = Na(+)(out). It catalyses the reaction nitrate(in) = nitrate(out). It carries out the reaction L-aspartate(out) = L-aspartate(in). The catalysed reaction is L-glutamate(out) = L-glutamate(in). The enzyme catalyses D-gluconate(in) = D-gluconate(out). It catalyses the reaction spermidine(in) = spermidine(out). Functionally, ion channel involved in a variety of physiological functions such as blood pressure regulation, apoptotic cell clearance and oogenesis. Forms anion-selective channels with relatively low conductance and an order of permeabilities: nitrate&gt;iodide&gt;chlroride&gt;&gt;aspartate=glutamate=gluconate. Can release ATP upon activation through phosphorylation or cleavage at C-terminus. May play a role as a Ca(2+)-leak channel to regulate ER Ca(2+) homeostasis. In terms of biological role, during apoptosis, the C terminal tail is cleaved by caspases, which opens the main pore acting as a large-pore ATP efflux channel with a broad distribution, which allows the regulated release of molecules and ions smaller than 1 kDa, such as nucleotides ATP and UTP, and selective plasma membrane permeability to attract phagocytes that engulf the dying cells. This chain is Pannexin-1 (Panx1), found in Rattus norvegicus (Rat).